Reading from the N-terminus, the 268-residue chain is Non-homologous end joining protein Ku (268 aa).

Positions 13–175 (VSLVTCPVTM…TLHDGNAVRN (163 aa)) constitute a Ku domain. Positions 174–194 (RNGGHPAARTRPASEAESADS) are disordered.

Belongs to the prokaryotic Ku family. As to quaternary structure, homodimer. Interacts with LigD.

Functionally, with LigD forms a non-homologous end joining (NHEJ) DNA repair enzyme, which repairs dsDNA breaks with reduced fidelity. Binds linear dsDNA with 5'- and 3'- overhangs but not closed circular dsDNA nor ssDNA. Recruits and stimulates the ligase activity of LigD. This chain is Non-homologous end joining protein Ku, found in Gluconacetobacter diazotrophicus (strain ATCC 49037 / DSM 5601 / CCUG 37298 / CIP 103539 / LMG 7603 / PAl5).